We begin with the raw amino-acid sequence, 213 residues long: Kiwellin (213 aa).

Positions 1–24 are cleaved as a signal peptide; that stretch reads MAQLALLLLSLFLTLISLAPPGAS. 3 disulfides stabilise this stretch: Cys-28–Cys-60, Cys-32–Cys-44, and Cys-38–Cys-49. Residues Pro-65 and Pro-67 each carry the 4-hydroxyproline modification. Cystine bridges form between Cys-72–Cys-90, Cys-80–Cys-172, Cys-119–Cys-144, and Cys-166–Cys-172. The tract at residues 91-121 is disordered; that stretch reads SPPVTSSTPAKLTNNDFSEGGDDGGPSECDE. Over residues 93-107 the composition is skewed to polar residues; sequence PVTSSTPAKLTNNDF.

Belongs to the kiwellin family. In terms of processing, undergoes proteolytic cleavage by actinidin to produce kissper and KiTH. Three forms of KiTH are produced by cleavage at different sites, the main form produced in vivo is KiTH-1.

Its subcellular location is the secreted. PH-dependent, voltage-gated and anion-selective pore-forming peptide. The protein is Kiwellin of Actinidia deliciosa (Kiwi).